Here is a 79-residue protein sequence, read N- to C-terminus: Endothelin-2 (79 aa).

Positions 1-23 (PEQTAPYGLGNPPRRRRRSLPRR) are disordered. Residues 24–39 (CQCSSARDPSCATFCL) are endothelin-like. The tract at residues 51–79 (SRKSPADVFQTGKTGATRGELLQRLRDIS) is disordered.

Belongs to the endothelin/sarafotoxin family.

The protein localises to the secreted. Functionally, endothelins are endothelium-derived vasoconstrictor peptides. The protein is Endothelin-2 (EDN2) of Macaca fascicularis (Crab-eating macaque).